The primary structure comprises 67 residues: MPQLDTSTWFTTVLASSITLFILMQLKISFHDLHKKPSNKYLKLFKPTNPWEQKWTKIYSPLSLPQP.

Residues 8–24 (TWFTTVLASSITLFILM) form a helical membrane-spanning segment. An N6-acetyllysine; alternate modification is found at Lys-54. Lys-54 is subject to N6-succinyllysine; alternate. At Lys-57 the chain carries N6-acetyllysine.

The protein belongs to the ATPase protein 8 family. Component of the ATP synthase complex composed at least of ATP5F1A/subunit alpha, ATP5F1B/subunit beta, ATP5MC1/subunit c (homooctomer), MT-ATP6/subunit a, MT-ATP8/subunit 8, ATP5ME/subunit e, ATP5MF/subunit f, ATP5MG/subunit g, ATP5MK/subunit k, ATP5MJ/subunit j, ATP5F1C/subunit gamma, ATP5F1D/subunit delta, ATP5F1E/subunit epsilon, ATP5PF/subunit F6, ATP5PB/subunit b, ATP5PD/subunit d, ATP5PO/subunit OSCP. ATP synthase complex consists of a soluble F(1) head domain (subunits alpha(3) and beta(3)) - the catalytic core - and a membrane F(0) domain - the membrane proton channel (subunits c, a, 8, e, f, g, k and j). These two domains are linked by a central stalk (subunits gamma, delta, and epsilon) rotating inside the F1 region and a stationary peripheral stalk (subunits F6, b, d, and OSCP). Interacts with PRICKLE3.

It is found in the mitochondrion membrane. Functionally, subunit 8, of the mitochondrial membrane ATP synthase complex (F(1)F(0) ATP synthase or Complex V) that produces ATP from ADP in the presence of a proton gradient across the membrane which is generated by electron transport complexes of the respiratory chain. ATP synthase complex consist of a soluble F(1) head domain - the catalytic core - and a membrane F(1) domain - the membrane proton channel. These two domains are linked by a central stalk rotating inside the F(1) region and a stationary peripheral stalk. During catalysis, ATP synthesis in the catalytic domain of F(1) is coupled via a rotary mechanism of the central stalk subunits to proton translocation. In vivo, can only synthesize ATP although its ATP hydrolase activity can be activated artificially in vitro. Part of the complex F(0) domain. The sequence is that of ATP synthase F(0) complex subunit 8 from Cricetulus griseus (Chinese hamster).